The primary structure comprises 347 residues: Phenylalanine--tRNA ligase alpha subunit (347 aa).

E261 contributes to the Mg(2+) binding site.

It belongs to the class-II aminoacyl-tRNA synthetase family. Phe-tRNA synthetase alpha subunit type 1 subfamily. As to quaternary structure, tetramer of two alpha and two beta subunits. Requires Mg(2+) as cofactor.

It localises to the cytoplasm. It carries out the reaction tRNA(Phe) + L-phenylalanine + ATP = L-phenylalanyl-tRNA(Phe) + AMP + diphosphate + H(+). This is Phenylalanine--tRNA ligase alpha subunit from Streptococcus thermophilus (strain ATCC BAA-491 / LMD-9).